The following is a 381-amino-acid chain: Creatine kinase M-type (381 aa).

Positions 11-98 (KLKFSAEEEF…FDPVIQDRHG (88 aa)) constitute a Phosphagen kinase N-terminal domain. Residues 99–118 (GYKPTDKHRTDLNHENLKGG) are disordered. A Phosphagen kinase C-terminal domain is found at 125–367 (YVLSSRVRTG…KLMVEMEKKL (243 aa)). ATP-binding positions include 128–132 (SSRVR), histidine 191, arginine 236, arginine 292, 320–325 (RGTGGV), and aspartate 335.

This sequence belongs to the ATP:guanido phosphotransferase family. In terms of assembly, dimer of identical or non-identical chains, which can be either B (brain type) or M (muscle type). With MM being the major form in skeletal muscle and myocardium, MB existing in myocardium, and BB existing in many tissues, especially brain. Predominantly found in skeletal muscle, but not in the heart.

The protein resides in the cytoplasm. It carries out the reaction creatine + ATP = N-phosphocreatine + ADP + H(+). Reversibly catalyzes the transfer of phosphate between ATP and various phosphogens (e.g. creatine phosphate). Creatine kinase isoenzymes play a central role in energy transduction in tissues with large, fluctuating energy demands, such as skeletal muscle, heart, brain and spermatozoa. This chain is Creatine kinase M-type, found in Gallus gallus (Chicken).